A 495-amino-acid polypeptide reads, in one-letter code: ATP synthase subunit beta, chloroplastic (495 aa).

172–179 lines the ATP pocket; sequence GGAGVGKT.

It belongs to the ATPase alpha/beta chains family. F-type ATPases have 2 components, CF(1) - the catalytic core - and CF(0) - the membrane proton channel. CF(1) has five subunits: alpha(3), beta(3), gamma(1), delta(1), epsilon(1). CF(0) has four main subunits: a(1), b(1), b'(1) and c(9-12).

It is found in the plastid. The protein resides in the chloroplast thylakoid membrane. It catalyses the reaction ATP + H2O + 4 H(+)(in) = ADP + phosphate + 5 H(+)(out). In terms of biological role, produces ATP from ADP in the presence of a proton gradient across the membrane. The catalytic sites are hosted primarily by the beta subunits. The chain is ATP synthase subunit beta, chloroplastic from Hyacinthoides non-scripta (English bluebell).